Consider the following 291-residue polypeptide: Small ribosomal subunit biogenesis GTPase RsgA (291 aa).

The 159-residue stretch at 63–221 folds into the CP-type G domain; it reads QNELKRPPVS…VADTPGFSAL (159 aa). GTP is bound by residues 112–115 and 164–172; these read TKKD and GQSGVGKST. Zn(2+) is bound by residues Cys245, Cys250, His252, and Cys258.

The protein belongs to the TRAFAC class YlqF/YawG GTPase family. RsgA subfamily. As to quaternary structure, monomer. Associates with 30S ribosomal subunit, binds 16S rRNA. It depends on Zn(2+) as a cofactor.

The protein localises to the cytoplasm. Functionally, one of several proteins that assist in the late maturation steps of the functional core of the 30S ribosomal subunit. Helps release RbfA from mature subunits. May play a role in the assembly of ribosomal proteins into the subunit. Circularly permuted GTPase that catalyzes slow GTP hydrolysis, GTPase activity is stimulated by the 30S ribosomal subunit. In Staphylococcus carnosus (strain TM300), this protein is Small ribosomal subunit biogenesis GTPase RsgA.